A 232-amino-acid polypeptide reads, in one-letter code: Ornithine carbamoyltransferase (232 aa).

Residues glutamine 15, arginine 39, and 66 to 69 (HPTQ) each bind carbamoyl phosphate. Residues asparagine 99, aspartate 163, and 167-168 (SM) contribute to the L-ornithine site. Carbamoyl phosphate-binding positions include 204–207 (HCLP) and threonine 232.

Belongs to the aspartate/ornithine carbamoyltransferase superfamily. OTCase family.

It localises to the cytoplasm. The enzyme catalyses carbamoyl phosphate + L-ornithine = L-citrulline + phosphate + H(+). It functions in the pathway amino-acid biosynthesis; L-arginine biosynthesis; L-arginine from L-ornithine and carbamoyl phosphate: step 1/3. In terms of biological role, reversibly catalyzes the transfer of the carbamoyl group from carbamoyl phosphate (CP) to the N(epsilon) atom of ornithine (ORN) to produce L-citrulline. The protein is Ornithine carbamoyltransferase (argF) of Neisseria pharyngis.